Here is a 503-residue protein sequence, read N- to C-terminus: Probable cytosol aminopeptidase (503 aa).

Mn(2+)-binding residues include Lys270 and Asp275. Lys282 is a catalytic residue. Mn(2+)-binding residues include Asp293, Asp352, and Glu354. Arg356 is an active-site residue.

Belongs to the peptidase M17 family. Mn(2+) serves as cofactor.

Its subcellular location is the cytoplasm. The catalysed reaction is Release of an N-terminal amino acid, Xaa-|-Yaa-, in which Xaa is preferably Leu, but may be other amino acids including Pro although not Arg or Lys, and Yaa may be Pro. Amino acid amides and methyl esters are also readily hydrolyzed, but rates on arylamides are exceedingly low.. The enzyme catalyses Release of an N-terminal amino acid, preferentially leucine, but not glutamic or aspartic acids.. Functionally, presumably involved in the processing and regular turnover of intracellular proteins. Catalyzes the removal of unsubstituted N-terminal amino acids from various peptides. The polypeptide is Probable cytosol aminopeptidase (Sodalis glossinidius (strain morsitans)).